We begin with the raw amino-acid sequence, 79 residues long: Conotoxin MIVA (79 aa).

The N-terminal stretch at 1-21 is a signal peptide; the sequence is MGMRMMFTVFLLVVLATTVVS. Residues 22-38 constitute a propeptide that is removed on maturation; that stretch reads IPSDRASDGRNAVVHER. Position 40 is a 4-hydroxyproline (Pro40). 4-carboxyglutamate is present on Glu41. O-linked (HexNAc...) threonine glycosylation is found at Thr45 and Thr47. 6 positions are modified to 4-hydroxyproline: Pro55, Pro60, Pro61, Pro69, Pro70, and Pro74. Pro74 bears the Proline amide mark. Residues 75-79 constitute a propeptide that is removed on maturation; sequence GRRND.

O-linked glycan consists of Hex4-HexNAc2 hexasaccharide. Post-translationally, contains 3 disulfide bonds. In terms of tissue distribution, expressed by the venom duct.

The protein resides in the secreted. Its function is as follows. Probable neurotoxin with ion channel inhibitor activity. The polypeptide is Conotoxin MIVA (Conus magus (Magical cone)).